A 669-amino-acid chain; its full sequence is Probable ferric reductase transmembrane component (669 aa).

The segment at 17–86 is disordered; it reads FKTNGTEYAK…SGKGNSGTST (70 aa). N-linked (GlcNAc...) asparagine glycans are attached at residues N20, N52, N64, and N116. Positions 28–86 are enriched in low complexity; sequence TTKSSSGSKTSTSASKSSKSTGSSNASKSSTNAHGSNSSTSSTSSSSSKSGKGNSGTST. A helical membrane pass occupies residues 122–142; the sequence is GSGLLGYWAGILAIAIFANMI. N152 is a glycosylation site (N-linked (GlcNAc...) asparagine). The next 5 helical transmembrane spans lie at 198-218, 234-254, 281-301, 313-333, and 340-360; these read IIVV…IHHV, LIAD…ILFG, VDVL…KATG, IWGT…MLFF, and VFFL…YYHL. A Ferric oxidoreductase domain is found at 239 to 373; the sequence is TGILGTFLIP…GYGDFMWAAI (135 aa). Positions 374–492 constitute an FAD-binding FR-type domain; sequence AVWAFDRVVR…EGPYGEPSSA (119 aa). 437–442 is an FAD binding site; sequence HPFTFT. The helical transmembrane segment at 499–519 threads the bilayer; sequence VVFVAGGNGIPGIYSECVDLA. N-linked (GlcNAc...) asparagine glycans are attached at residues N524 and N653.

The protein belongs to the ferric reductase (FRE) family. It depends on FAD as a cofactor.

Its subcellular location is the membrane. It carries out the reaction 2 a Fe(II)-siderophore + NAD(+) + H(+) = 2 a Fe(III)-siderophore + NADH. This is Probable ferric reductase transmembrane component (CFL1) from Candida albicans (Yeast).